A 164-amino-acid polypeptide reads, in one-letter code: Cyclin-dependent kinase inhibitor 1 (164 aa).

Ser-2 carries the post-translational modification N-acetylserine. Residue Ser-2 forms a Glycyl serine ester (Ser-Gly) (interchain with G-Cter in ubiquitin) linkage. The C4-type zinc-finger motif lies at 13–41 (HGSKACRRLFGPVDSEQLRRDCDALMAGC). Positions 17 to 24 (ACRRLFGP) are required for binding cyclins. Positions 53-58 (FVTETP) are required for binding CDKs. The interval 80 to 164 (AGPRGGRDDL…RRLIFSKRKP (85 aa)) is disordered. Ser-114 bears the Phosphoserine; by GSK3-beta mark. Ser-130 is subject to Phosphoserine. The PIP-box K+4 motif signature appears at 140 to 164 (RKRRQTSMTDFYHSKRRLIFSKRKP). Positions 141 to 156 (KRRQTSMTDFYHSKRR) match the Nuclear localization signal motif. Thr-145 carries the phosphothreonine; by PKA, PKB/AKT1, PIM1 and PIM2 modification. Ser-146 carries the phosphoserine; by PKC and NUAK1 modification. The interaction with TRIM39 stretch occupies residues 152–164 (HSKRRLIFSKRKP). Basic residues predominate over residues 153 to 164 (SKRRLIFSKRKP). Position 160 is a phosphoserine (Ser-160).

This sequence belongs to the CDI family. As to quaternary structure, interacts with HDAC1; the interaction is prevented by competitive binding of C10orf90/FATS to HDAC1 facilitating acetylation and protein stabilization of CDKN1A/p21. Interacts with MKRN1. Interacts with PSMA3. Interacts with PCNA. Component of the ternary complex, cyclin D-CDK4-CDKN1A. Interacts (via its N-terminal domain) with CDK4; the interaction promotes the assembly of the cyclin D-CDK4 complex, its nuclear translocation and promotes the cyclin D-dependent enzyme activity of CDK4. Binding to CDK2 leads to CDK2/cyclin E inactivation at the G1-S phase DNA damage checkpoint, thereby arresting cells at the G1-S transition during DNA repair. Interacts with PIM1. Interacts with STK11 and NUAK1. Interacts with DTL and TRIM39. Interacts with PKP3; the interaction sequesters CDKN1A to the cytoplasm thereby repressing its role as an inhibitor of CDK4- and CDK6-driven RB1 phosphorylation. Post-translationally, phosphorylation of Thr-145 by Akt or of Ser-146 by PKC impairs binding to PCNA. Phosphorylation at Ser-114 by GSK3-beta enhances ubiquitination by the DCX(DTL) complex. Phosphorylation of Thr-145 by PIM2 enhances protein stability and inhibits cell proliferation. Phosphorylation of Thr-145 by PIM1 results in the relocation of CDKN1A to the cytoplasm and enhanced CDKN1A protein stability. UV radiation-induced phosphorylation at Ser-146 by NUAK1 leads to its degradation. Ubiquitinated by MKRN1; leading to polyubiquitination and 26S proteasome-dependent degradation. Ubiquitinated by the DCX(DTL) complex, also named CRL4(CDT2) complex, leading to its degradation during S phase or following UV irradiation. Ubiquitination by the DCX(DTL) complex is essential to control replication licensing and is PCNA-dependent: interacts with PCNA via its PIP-box, while the presence of the containing the 'K+4' motif in the PIP box, recruit the DCX(DTL) complex, leading to its degradation. Ubiquitination at Ser-2 leads to degradation by the proteasome pathway. Ubiquitinated by RNF114; leading to proteasomal degradation. In terms of processing, acetylation leads to protein stability. Acetylated in vitro on Lys-141, Lys-154, Lys-161 and Lys-163. Deacetylation by HDAC1 is prevented by competitive binding of C10orf90/FATS to HDAC1.

It localises to the cytoplasm. Its subcellular location is the nucleus. May be involved in p53/TP53 mediated inhibition of cellular proliferation in response to DNA damage. Binds to and inhibits cyclin-dependent kinase activity, preventing phosphorylation of critical cyclin-dependent kinase substrates and blocking cell cycle progression. Functions in the nuclear localization and assembly of cyclin D-CDK4 complex and promotes its kinase activity towards RB1. At higher stoichiometric ratios, inhibits the kinase activity of the cyclin D-CDK4 complex. Inhibits DNA synthesis by DNA polymerase delta by competing with POLD3 for PCNA binding. Plays an important role in controlling cell cycle progression and DNA damage-induced G2 arrest. Negatively regulates the CDK4- and CDK6-driven phosphorylation of RB1 in keratinocytes, thereby resulting in the release of E2F1 and subsequent transcription of E2F1-driven G1/S phase promoting genes. In Felis catus (Cat), this protein is Cyclin-dependent kinase inhibitor 1 (CDKN1A).